Reading from the N-terminus, the 223-residue chain is Endonuclease V (223 aa).

Mg(2+)-binding residues include aspartate 35 and aspartate 103.

Belongs to the endonuclease V family. Mg(2+) serves as cofactor.

It is found in the cytoplasm. The catalysed reaction is Endonucleolytic cleavage at apurinic or apyrimidinic sites to products with a 5'-phosphate.. In terms of biological role, DNA repair enzyme involved in the repair of deaminated bases. Selectively cleaves double-stranded DNA at the second phosphodiester bond 3' to a deoxyinosine leaving behind the intact lesion on the nicked DNA. The sequence is that of Endonuclease V from Cronobacter sakazakii (strain ATCC BAA-894) (Enterobacter sakazakii).